The primary structure comprises 272 residues: 4-hydroxy-tetrahydrodipicolinate reductase (272 aa).

Residues 11–16 (GVSGRM) and glutamate 37 each bind NAD(+). Position 38 (arginine 38) interacts with NADP(+). NAD(+)-binding positions include 101–103 (GTT) and 125–128 (AGNM). The Proton donor/acceptor role is filled by histidine 158. Histidine 159 is a binding site for (S)-2,3,4,5-tetrahydrodipicolinate. Lysine 162 (proton donor) is an active-site residue. 168–169 (GT) serves as a coordination point for (S)-2,3,4,5-tetrahydrodipicolinate.

The protein belongs to the DapB family.

Its subcellular location is the cytoplasm. It carries out the reaction (S)-2,3,4,5-tetrahydrodipicolinate + NAD(+) + H2O = (2S,4S)-4-hydroxy-2,3,4,5-tetrahydrodipicolinate + NADH + H(+). The catalysed reaction is (S)-2,3,4,5-tetrahydrodipicolinate + NADP(+) + H2O = (2S,4S)-4-hydroxy-2,3,4,5-tetrahydrodipicolinate + NADPH + H(+). The protein operates within amino-acid biosynthesis; L-lysine biosynthesis via DAP pathway; (S)-tetrahydrodipicolinate from L-aspartate: step 4/4. In terms of biological role, catalyzes the conversion of 4-hydroxy-tetrahydrodipicolinate (HTPA) to tetrahydrodipicolinate. The protein is 4-hydroxy-tetrahydrodipicolinate reductase of Roseobacter denitrificans (strain ATCC 33942 / OCh 114) (Erythrobacter sp. (strain OCh 114)).